Here is a 246-residue protein sequence, read N- to C-terminus: Bacteriorhodopsin-II-like protein (246 aa).

The next 7 membrane-spanning stretches (helical) occupy residues 7–27, 45–65, 82–102, 107–127, 135–155, 182–202, and 205–225; these read EATWLWIGTIGMVLGTVYFAV, TLIPAIAAAAYLAMATGLGVI, YADWLLTTPLLIIDLALVAGA, LYKLIIIDAIMILGGLAGSMM, IVWWAVSTAAFIILLYYLLGE, WALYPIVWILGTGGGFGIIAV, and EIMLYVMLDIGTKIGFGAVLL. Lysine 217 is subject to N6-(retinylidene)lysine.

Belongs to the archaeal/bacterial/fungal opsin family. Post-translationally, the covalent binding of retinal to the apoprotein, bacterioopsin, generates bacteriorhodopsin.

It is found in the cell membrane. Its function is as follows. Has no proton-pumping activity but is potentially capable of functioning as a sensory SRII-like protein. The chromophore contains 36.5% all-trans-, 7.6% 11-cis- and 56.4% 13-cis-retinal in the dark and 30.1% 11-cis- and 47.7% 13-cis-retinal upon illumination with &gt;460 nm light. This chain is Bacteriorhodopsin-II-like protein (bop2), found in Haloquadratum walsbyi (strain DSM 16790 / HBSQ001).